The sequence spans 843 residues: MPLSYQHFRKLLLLDDEAGPLEEELPRLADEGLNRRVAEDLNLGNLNVSIPWTHKVGNFTGLYSSTVPSFNPQWQTPSFPDIHLQEDIINKCKQFVGPLTVNEKRRLKLIMPARFYPNVTKYLPLDKGIKPYYPEHVVNHYFQTRHYLHTLWKAGILYKRETTRSASFCGSPYSWEQELQHGRLVLQTSTRHGDKSFRPQSSGILSRSPVGPCIQSQLRQSRLGPQPTQGQLAGLQQGGSGSIRAGIHSTPWGTVGVEPSSSGHTHNCANSSSSCLHQSAVRKEAYSPVSTSKRHSSSGNAVELHHVPPNSSRSQSQGSVLSCWWLQFRNSKPCSEHCLFHIVNLIDDWGPCAEHGEHRIRTPRTPARVTGGVFLVDKNPHNTSESRLVVDFSQFSRGNTRVSWPKFAVPNLQSLTNLLSSDLSWLSLDVSAAFYHLPLHPAAMPHLLVGSSGLSRYVARLSSNSRIINHQHRTMQNLHDSCSRNLYVSLMLLYKTYGRKLHLYSHPIILGFRKIPMGVGLSPFLLAQFTSAICSVVRRAFPHCLAFSYMDDVVLGAKSVQHLESLYAAVTNFLLSLGIHLNPQKTKRWGYSLNFMGYVIGSWGTLPQEHIVLKIKQCFRKLPVNRPIDWKVCQRIVGLLGFAAPFTQCGYPALMPLYACIQAKQAFTFSPTYKAFLNKQYLNLYPVARQRPGLCQVFADATPTGWGLAIGHQRMRGTFVSPLPIHTVELLAACFARSRSGAKLIGTDNSVVLSRKYTSFPWLLGCAANWILRGTSFVYVPSALNPADDPSRGRLGLYRPLLRLPYRPTTGRTSLYADSPSVPSHLPDRVHFASPLHVAWRPP.

The terminal protein domain (TP) stretch occupies residues 1 to 177; the sequence is MPLSYQHFRK…FCGSPYSWEQ (177 aa). The tract at residues 178–346 is spacer; that stretch reads ELQHGRLVLQ…HCLFHIVNLI (169 aa). Disordered regions lie at residues 221–240 and 289–315; these read SRLG…QGGS and VSTS…SRSQ. The segment covering 223-235 has biased composition (low complexity); the sequence is LGPQPTQGQLAGL. Positions 347 to 690 are polymerase/reverse transcriptase domain (RT); it reads DDWGPCAEHG…YLNLYPVARQ (344 aa). Residues 357 to 600 form the Reverse transcriptase domain; it reads EHRIRTPRTP…YSLNFMGYVI (244 aa). Mg(2+) contacts are provided by D429, D551, and D552.

Belongs to the hepadnaviridae P protein family.

It catalyses the reaction DNA(n) + a 2'-deoxyribonucleoside 5'-triphosphate = DNA(n+1) + diphosphate. The catalysed reaction is Endonucleolytic cleavage to 5'-phosphomonoester.. Its activity is regulated as follows. Activated by host HSP70 and HSP40 in vitro to be able to bind the epsilon loop of the pgRNA. Because deletion of the RNase H region renders the protein partly chaperone-independent, the chaperones may be needed indirectly to relieve occlusion of the RNA-binding site by this domain. Inhibited by several reverse-transcriptase inhibitors: Lamivudine, Adefovir and Entecavir. Its function is as follows. Multifunctional enzyme that converts the viral RNA genome into dsDNA in viral cytoplasmic capsids. This enzyme displays a DNA polymerase activity that can copy either DNA or RNA templates, and a ribonuclease H (RNase H) activity that cleaves the RNA strand of RNA-DNA heteroduplexes in a partially processive 3'- to 5'-endonucleasic mode. Neo-synthesized pregenomic RNA (pgRNA) are encapsidated together with the P protein, and reverse-transcribed inside the nucleocapsid. Initiation of reverse-transcription occurs first by binding the epsilon loop on the pgRNA genome, and is initiated by protein priming, thereby the 5'-end of (-)DNA is covalently linked to P protein. Partial (+)DNA is synthesized from the (-)DNA template and generates the relaxed circular DNA (RC-DNA) genome. After budding and infection, the RC-DNA migrates in the nucleus, and is converted into a plasmid-like covalently closed circular DNA (cccDNA). The activity of P protein does not seem to be necessary for cccDNA generation, and is presumably released from (+)DNA by host nuclear DNA repair machinery. The protein is Protein P of Homo sapiens (Human).